The primary structure comprises 122 residues: Protein YqjC (122 aa).

Positions 1–20 (MKYRIALAVSLFALSAGSYA) are cleaved as a signal peptide. The tract at residues 65–100 (QLRADHQKKIAKQKDEVAERQQDLAEAKQKGDADKI) is disordered. The segment covering 66 to 100 (LRADHQKKIAKQKDEVAERQQDLAEAKQKGDADKI) has biased composition (basic and acidic residues).

The sequence is that of Protein YqjC (yqjC) from Escherichia coli (strain K12).